A 193-amino-acid chain; its full sequence is NAD(P)H-quinone oxidoreductase subunit I (193 aa).

4Fe-4S ferredoxin-type domains are found at residues 56 to 85 (GRIH…VDWE) and 96 to 125 (KHYS…MTEE). 8 residues coordinate [4Fe-4S] cluster: cysteine 65, cysteine 68, cysteine 71, cysteine 75, cysteine 105, cysteine 108, cysteine 111, and cysteine 115. Residues 174-193 (NLPKGSQRAGQHPEDLVKAE) are disordered. Over residues 184–193 (QHPEDLVKAE) the composition is skewed to basic and acidic residues.

Belongs to the complex I 23 kDa subunit family. As to quaternary structure, NDH-1 is composed of at least 11 different subunits. [4Fe-4S] cluster serves as cofactor.

The protein resides in the cellular thylakoid membrane. It catalyses the reaction a plastoquinone + NADH + (n+1) H(+)(in) = a plastoquinol + NAD(+) + n H(+)(out). The catalysed reaction is a plastoquinone + NADPH + (n+1) H(+)(in) = a plastoquinol + NADP(+) + n H(+)(out). Its function is as follows. NDH-1 shuttles electrons from an unknown electron donor, via FMN and iron-sulfur (Fe-S) centers, to quinones in the respiratory and/or the photosynthetic chain. The immediate electron acceptor for the enzyme in this species is believed to be plastoquinone. Couples the redox reaction to proton translocation, and thus conserves the redox energy in a proton gradient. The polypeptide is NAD(P)H-quinone oxidoreductase subunit I (Synechocystis sp. (strain ATCC 27184 / PCC 6803 / Kazusa)).